The chain runs to 346 residues: Very-long-chain 3-oxoacyl-CoA reductase (346 aa).

A helical transmembrane segment spans residues 19–39; sequence LIYGVLFVGVYKITTFTLSVG. NADP(+)-binding residues include valine 65, aspartate 119, asparagine 146, tyrosine 220, lysine 224, valine 253, and serine 255. The Proton donor role is filled by tyrosine 220. Lysine 224 (lowers pKa of active site Tyr) is an active-site residue.

This sequence belongs to the short-chain dehydrogenases/reductases (SDR) family.

The protein localises to the endoplasmic reticulum membrane. The enzyme catalyses a very-long-chain (3R)-3-hydroxyacyl-CoA + NADP(+) = a very-long-chain 3-oxoacyl-CoA + NADPH + H(+). Its pathway is lipid metabolism; fatty acid biosynthesis. In terms of biological role, component of the microsomal membrane bound fatty acid elongation system, which produces the 26-carbon very long-chain fatty acids (VLCFA) from palmitate. Catalyzes the reduction of the 3-ketoacyl-CoA intermediate that is formed in each cycle of fatty acid elongation. VLCFAs serve as precursors for ceramide and sphingolipids. The protein is Very-long-chain 3-oxoacyl-CoA reductase of Debaryomyces hansenii (strain ATCC 36239 / CBS 767 / BCRC 21394 / JCM 1990 / NBRC 0083 / IGC 2968) (Yeast).